Reading from the N-terminus, the 217-residue chain is 2-phospho-L-lactate guanylyltransferase (217 aa).

The protein belongs to the CofC family. In terms of assembly, homodimer.

The enzyme catalyses (2S)-2-phospholactate + GTP + H(+) = (2S)-lactyl-2-diphospho-5'-guanosine + diphosphate. It functions in the pathway cofactor biosynthesis; coenzyme F420 biosynthesis. Its function is as follows. Guanylyltransferase that catalyzes the activation of (2S)-2-phospholactate (2-PL) as (2S)-lactyl-2-diphospho-5'-guanosine, via the condensation of 2-PL with GTP. It is involved in the biosynthesis of coenzyme F420, a hydride carrier cofactor. The sequence is that of 2-phospho-L-lactate guanylyltransferase from Halorubrum lacusprofundi (strain ATCC 49239 / DSM 5036 / JCM 8891 / ACAM 34).